The chain runs to 108 residues: uncharacterized protein (108 aa).

The disordered stretch occupies residues 1 to 108; it reads MAKVTSEPQK…DKEQSETSVL (108 aa). The span at 26 to 56 shows a compositional bias: basic residues; it reads KGRKKGKTPRQRRSRSGVKGLKTTRKAKRPL. Residues 58 to 70 are compositionally biased toward polar residues; it reads GSSSQKAGETNTP. Over residues 73-92 the composition is skewed to basic residues; the sequence is KPKKARGPILRGRYHRLKEK. The span at 93-108 shows a compositional bias: basic and acidic residues; it reads MKKEEADKEQSETSVL.

This is an uncharacterized protein from Homo sapiens (Human).